A 460-amino-acid polypeptide reads, in one-letter code: MVLDDLGSSLRGTLDTLRGKSRISEEDVDKVVKEIQRSLLQADVDVDLVMDLSESITERSLEEEPPGGTSARDHVLRIVYEELVGLVGDSTPIPLEEQTIMLAGLQGSGKTTTAAKMAWWFSKKGLRPAIVQTDTFRPGAYEQAAEMADRAEVDFYGEPDSDDPVQIARDGLAATADADVHIVDTAGRHALEDDLIAEIEEIEGVVEPDRSLLVLDAAIGQGAKQQARQFDASIGIDGVAITKLDGTAKGGGSLTAVNETDSTIAFLGSGETVQDIERFEPDSFISRLLGMGDLKQLTERVERAMEETQDDDEDWDPEDLMKGEFTLHDMRKQMQAMDNMGPLDQVMDMIPGMGGGLMDELPDDAMDVTQERMRGFEVIMDSMTEAEMADPRSVGASQIRRIARGSGQPEDRVRELLDQHKMMAQTMQQFQGMGDGDMQRMMSKMQQQGGGGGGGFGGMF.

Residues 104–111 (GLQGSGKT), 184–188 (DTAGR), and 242–245 (TKLD) contribute to the GTP site.

Belongs to the GTP-binding SRP family. SRP54 subfamily. Part of the signal recognition particle protein translocation system, which is composed of SRP and FtsY. Archaeal SRP consists of a 7S RNA molecule of 300 nucleotides and two protein subunits: SRP54 and SRP19.

The protein localises to the cytoplasm. It carries out the reaction GTP + H2O = GDP + phosphate + H(+). Involved in targeting and insertion of nascent membrane proteins into the cytoplasmic membrane. Binds to the hydrophobic signal sequence of the ribosome-nascent chain (RNC) as it emerges from the ribosomes. The SRP-RNC complex is then targeted to the cytoplasmic membrane where it interacts with the SRP receptor FtsY. This Halobacterium salinarum (strain ATCC 29341 / DSM 671 / R1) protein is Signal recognition particle 54 kDa protein.